Consider the following 402-residue polypeptide: Arginine deiminase (402 aa).

Residue Cys392 is the Amidino-cysteine intermediate of the active site.

The protein belongs to the arginine deiminase family.

It localises to the cytoplasm. It carries out the reaction L-arginine + H2O = L-citrulline + NH4(+). Its pathway is amino-acid degradation; L-arginine degradation via ADI pathway; carbamoyl phosphate from L-arginine: step 1/2. The polypeptide is Arginine deiminase (Mycolicibacterium gilvum (strain PYR-GCK) (Mycobacterium gilvum (strain PYR-GCK))).